Reading from the N-terminus, the 479-residue chain is Endo-beta-1,6-galactanase (479 aa).

The N-terminal stretch at 1 to 20 is a signal peptide; that stretch reads MRSIVLPSLALALFSQRARA. The N-linked (GlcNAc...) asparagine glycan is linked to Asn-89. Glu-210 acts as the Proton donor in catalysis. Asn-271 carries an N-linked (GlcNAc...) asparagine glycan. Residue Glu-311 is the Nucleophile of the active site. Asn-358 carries an N-linked (GlcNAc...) asparagine glycan.

The catalysed reaction is Endohydrolysis of (1-&gt;6)-beta-D-galactosidic linkages in arabinogalactan proteins and (1-&gt;3):(1-&gt;6)-beta-galactans to yield galactose and beta-(1-&gt;6)-galactaobiose as the final products.. Its function is as follows. Hydrolyzes galactooligomers with a degree of polymerization higher than 3. Hydrolyzes radish root arabinogalactan-protein. Does not hydrolyze dextran, arabinan, starch, laminarin, beta-1,4- and beta-1,3-galactans, larch wood arabinogalactan or acid-insoluble polygalacturonic acid. The sequence is that of Endo-beta-1,6-galactanase from Hypocrea rufa (Trichoderma viride).